The primary structure comprises 127 residues: Photosystem II reaction center Psb28 protein (127 aa).

A disordered region spans residues 107 to 127 (GLGYSQNQNSDQTDGDANAEA). Polar residues predominate over residues 109-118 (GYSQNQNSDQ).

It belongs to the Psb28 family. Part of the photosystem II complex.

It localises to the cellular thylakoid membrane. The polypeptide is Photosystem II reaction center Psb28 protein (Parasynechococcus marenigrum (strain WH8102)).